Here is a 260-residue protein sequence, read N- to C-terminus: 3-methyl-2-oxobutanoate hydroxymethyltransferase (260 aa).

2 residues coordinate Mg(2+): aspartate 44 and aspartate 83. 3-methyl-2-oxobutanoate contacts are provided by residues 44-45, aspartate 83, and lysine 113; that span reads DS. Glutamate 115 contributes to the Mg(2+) binding site. The active-site Proton acceptor is glutamate 183.

The protein belongs to the PanB family. In terms of assembly, homodecamer; pentamer of dimers. Mg(2+) serves as cofactor.

It localises to the cytoplasm. It carries out the reaction 3-methyl-2-oxobutanoate + (6R)-5,10-methylene-5,6,7,8-tetrahydrofolate + H2O = 2-dehydropantoate + (6S)-5,6,7,8-tetrahydrofolate. It functions in the pathway cofactor biosynthesis; (R)-pantothenate biosynthesis; (R)-pantoate from 3-methyl-2-oxobutanoate: step 1/2. Its function is as follows. Catalyzes the reversible reaction in which hydroxymethyl group from 5,10-methylenetetrahydrofolate is transferred onto alpha-ketoisovalerate to form ketopantoate. The chain is 3-methyl-2-oxobutanoate hydroxymethyltransferase from Gloeobacter violaceus (strain ATCC 29082 / PCC 7421).